Reading from the N-terminus, the 117-residue chain is Histone H1-like protein HC1 (117 aa).

Positions 57-117 (EKSGLMTRKP…KSSKSRYLRK (61 aa)) are disordered. A compositionally biased stretch (basic residues) spans 66–81 (PATKAKKAAATKKAAP). Residues 82-94 (KPKIQAKAAPKAK) are compositionally biased toward low complexity. A compositionally biased stretch (basic residues) spans 95–117 (ATTKKTPAKAKAKKSSKSRYLRK).

This sequence belongs to the histone H1/H5 family. HCT subfamily.

Its function is as follows. Might have a role analogous to that of eukaryotic histone proteins. The sequence is that of Histone H1-like protein HC1 (hctA) from Chlamydia psittaci (Chlamydophila psittaci).